The primary structure comprises 448 residues: C4-dicarboxylate transport protein (448 aa).

9 helical membrane-spanning segments follow: residues 9 to 29, 59 to 79, 91 to 111, 159 to 179, 203 to 223, 237 to 257, 312 to 332, 345 to 365, and 367 to 387; these read SLYF…HFYP, LIKM…IAGM, VALL…LLVI, AFAN…GFAL, IVNM…AFTI, LIIC…GTIS, GYSF…IFIA, ITLL…TGSG, and IVMA…LALI.

It belongs to the dicarboxylate/amino acid:cation symporter (DAACS) (TC 2.A.23) family.

It is found in the cell inner membrane. Its function is as follows. Responsible for the transport of dicarboxylates such as succinate, fumarate, and malate from the periplasm across the membrane. The protein is C4-dicarboxylate transport protein of Acinetobacter baylyi (strain ATCC 33305 / BD413 / ADP1).